The following is a 403-amino-acid chain: D-galactonate dehydratase family member ManD (403 aa).

2 residues coordinate substrate: Asn-37 and His-122. Tyr-159 functions as the Proton donor/acceptor in the catalytic mechanism. A Mg(2+)-binding site is contributed by Asp-211. Residue His-213 is the Proton donor/acceptor of the active site. The Mg(2+) site is built by Glu-237 and Glu-263. Substrate is bound by residues Glu-263, Arg-284, His-313, Asp-317, and Glu-340.

Belongs to the mandelate racemase/muconate lactonizing enzyme family. GalD subfamily. Mg(2+) serves as cofactor.

The enzyme catalyses D-mannonate = 2-dehydro-3-deoxy-D-gluconate + H2O. It catalyses the reaction D-gluconate = 2-dehydro-3-deoxy-D-gluconate + H2O. Has low dehydratase activity with D-mannonate and D-gluconate, suggesting that these are not physiological substrates and that it has no significant role in the in vivo degradation of these compounds. Has no detectable activity with a panel of 70 other acid sugars (in vitro). In Chromohalobacter salexigens (strain ATCC BAA-138 / DSM 3043 / CIP 106854 / NCIMB 13768 / 1H11), this protein is D-galactonate dehydratase family member ManD (manD).